Here is a 314-residue protein sequence, read N- to C-terminus: Pantothenate synthetase (314 aa).

An ATP-binding site is contributed by 43-50 (MGALHEGH). Catalysis depends on histidine 50, which acts as the Proton donor. Glutamine 75 serves as a coordination point for (R)-pantoate. Glutamine 75 serves as a coordination point for beta-alanine. The disordered stretch occupies residues 112–131 (MYPDGTRTSVHPGPLGDDLE). 161 to 164 (GEKD) contributes to the ATP binding site. Glutamine 167 lines the (R)-pantoate pocket. Residues valine 190 and 198–201 (LSSR) contribute to the ATP site.

It belongs to the pantothenate synthetase family. In terms of assembly, homodimer.

The protein resides in the cytoplasm. It carries out the reaction (R)-pantoate + beta-alanine + ATP = (R)-pantothenate + AMP + diphosphate + H(+). Its pathway is cofactor biosynthesis; (R)-pantothenate biosynthesis; (R)-pantothenate from (R)-pantoate and beta-alanine: step 1/1. Catalyzes the condensation of pantoate with beta-alanine in an ATP-dependent reaction via a pantoyl-adenylate intermediate. This chain is Pantothenate synthetase, found in Mycolicibacterium smegmatis (strain ATCC 700084 / mc(2)155) (Mycobacterium smegmatis).